The primary structure comprises 355 residues: Uroporphyrinogen decarboxylase (355 aa).

Substrate contacts are provided by residues 27-31 (RQAGR), aspartate 78, tyrosine 155, serine 210, and histidine 328.

It belongs to the uroporphyrinogen decarboxylase family. Homodimer.

The protein localises to the cytoplasm. The catalysed reaction is uroporphyrinogen III + 4 H(+) = coproporphyrinogen III + 4 CO2. It participates in porphyrin-containing compound metabolism; protoporphyrin-IX biosynthesis; coproporphyrinogen-III from 5-aminolevulinate: step 4/4. Catalyzes the decarboxylation of four acetate groups of uroporphyrinogen-III to yield coproporphyrinogen-III. This chain is Uroporphyrinogen decarboxylase, found in Pseudomonas aeruginosa (strain UCBPP-PA14).